Reading from the N-terminus, the 462-residue chain is Cysteine--tRNA ligase (462 aa).

Zn(2+) is bound at residue Cys29. Residues 31 to 41 carry the 'HIGH' region motif; it reads PTVYDHAHIGN. 3 residues coordinate Zn(2+): Cys214, His239, and Glu243. The short motif at 272 to 276 is the 'KMSKS' region element; the sequence is KMSKS. Lys275 is an ATP binding site.

Belongs to the class-I aminoacyl-tRNA synthetase family. Monomer. The cofactor is Zn(2+).

It localises to the cytoplasm. The enzyme catalyses tRNA(Cys) + L-cysteine + ATP = L-cysteinyl-tRNA(Cys) + AMP + diphosphate. The polypeptide is Cysteine--tRNA ligase (Xanthobacter autotrophicus (strain ATCC BAA-1158 / Py2)).